The primary structure comprises 447 residues: Selenide, water dikinase 3 (447 aa).

Sec-50 is a catalytic residue. A non-standard amino acid (selenocysteine) is located at residue Sec-50. ATP is bound by residues Lys-53, 103 to 105 (GMD), Asp-123, Asp-146, and 197 to 200 (GGQT). Asp-105 serves as a coordination point for Mg(2+). Mg(2+) is bound at residue Asp-146. Asp-301 lines the Mg(2+) pocket.

It belongs to the selenophosphate synthase 1 family. As to quaternary structure, homodimer. Mg(2+) serves as cofactor. In the embryo, expressed in retina, olfactory vesicles, tectum, pronephros ducts and myotomes at 24 hours post-fertilization and in retina, tectum, liver and intestinal bulb 3 days after fertilization.

The enzyme catalyses hydrogenselenide + ATP + H2O = selenophosphate + AMP + phosphate + 2 H(+). In terms of biological role, synthesizes selenophosphate from selenide and ATP. This chain is Selenide, water dikinase 3, found in Danio rerio (Zebrafish).